A 380-amino-acid chain; its full sequence is MTAANVPGSSIGVDALPIRENLRGKSAYGAPQLTVPVQLNTNENPHPPTKALVDDVAESVREAARELHRYPDRDAVALRTDLAAYLVRQTGVPVTVDNVWAANGSNEILQQLLQAFGGPGRSAMGFVPSYSMHPIIADGTETEWLPIFRRADFALDVDAATAAITERRPDVVFVTSPNNPTGHSVGIAELRRVLDAAPGIVIVDEAYAEFSDAPSALTLIDEYPSKLVVSRTMSKAFAFAGGRLGYLAAAPAFIEALLLVRLPYHLSVVTQAAARAALRHANETLASVHALATERVRVSKALDDTGFRVIPSDANFILFGEFTDSAHAWRAYLDRGVLIRDVGIPGYLRATVGLASENDAFIVASDEIAATELTSSGDRG.

The residue at position 235 (lysine 235) is an N6-(pyridoxal phosphate)lysine.

The protein belongs to the class-II pyridoxal-phosphate-dependent aminotransferase family. Histidinol-phosphate aminotransferase subfamily. In terms of assembly, homodimer. Pyridoxal 5'-phosphate is required as a cofactor.

The enzyme catalyses L-histidinol phosphate + 2-oxoglutarate = 3-(imidazol-4-yl)-2-oxopropyl phosphate + L-glutamate. It participates in amino-acid biosynthesis; L-histidine biosynthesis; L-histidine from 5-phospho-alpha-D-ribose 1-diphosphate: step 7/9. The sequence is that of Histidinol-phosphate aminotransferase from Rhodococcus jostii (strain RHA1).